The sequence spans 270 residues: Protein US2 homolog (270 aa).

The protein belongs to the herpesviridae US2 family.

This Gallid herpesvirus 2 (strain Chicken/Md5/ATCC VR-987) (GaHV-2) protein is Protein US2 homolog (MDV091).